The following is a 176-amino-acid chain: Nucleoside triphosphate/diphosphate phosphatase (176 aa).

Arg23 acts as the Proton donor in catalysis. Positions 87, 103, 105, 107, 120, and 123 each coordinate Mg(2+).

Belongs to the Ntdp family. Mg(2+) serves as cofactor.

It catalyses the reaction a ribonucleoside 5'-triphosphate + H2O = a ribonucleoside 5'-diphosphate + phosphate + H(+). It carries out the reaction a ribonucleoside 5'-diphosphate + H2O = a ribonucleoside 5'-phosphate + phosphate + H(+). Functionally, has nucleoside phosphatase activity towards nucleoside triphosphates and nucleoside diphosphates. This Bacillus cytotoxicus (strain DSM 22905 / CIP 110041 / 391-98 / NVH 391-98) protein is Nucleoside triphosphate/diphosphate phosphatase.